Here is a 732-residue protein sequence, read N- to C-terminus: MIFKVWFSYEDEEVELSELTNDTTVSAIRKILHEGKIFRFPYGTSQTDLQIGKMLPSGSGGGATADSKFEKFKARNTLADIQYKVGDTLYVRVKKSKPTNDSLLPTLNIAFLDGSERAIKWEYDPYTTTAQWTCTATLVKVEPVPFAEGAFRKAYHTLDLSKSGASGRYVSKIGKKPTPRPSYFEDVKMQMIAKKWADKYNSFKPPKKIEFLQSCVLEFVDRTSSDLICGAEPYVEGQYRKYNNNSGFVSNDERNTPQSFSHFTYEHSNHQLLIIDIQGVGDHYTDPQIHTYDGVGFGIGNLGQKGFEKFLDTHKCNAICQYLNLQSINPKSEKSDCGTVPRPDLIFPDTSERDNNNNNNNNNNNNNNNNNNNSNNNNNNNSSISKSLVEISSGSKERNDRDSPSRQLFVSNDGNTLNTNKERSKSKSIDLEKPEILINNKKKESINLETIKLIETIKGYHVTSHLCICDNLLFTGCSDNSIRVYDYKSQNMECVQTLKGHEGPVESICYNDQYLFSGSSDHSIKVWDLKKLRCIFTLEGHDKPVHTVLLNDKYLFSGSSDKTIKVWDLKTLECKYTLESHARAVKTLCISGQYLFSGSNDKTIKVWDLKTFRCNYTLKGHTKWVTTICILGTNLYSGSYDKTIRVWNLKSLECSATLRGHDRWVEHMVICDKLLFTASDDNTIKIWDLETLRCNTTLEGHNATVQCLAVWEDKKCVISCSHDQSIRVWGWN.

Residues 124-328 (DPYTTTAQWT…ICQYLNLQSI (205 aa)) enclose the Alpha-type protein kinase domain. An ATP-binding site is contributed by 298-303 (GIGNLG). The disordered stretch occupies residues 331-428 (KSEKSDCGTV…TNKERSKSKS (98 aa)). The segment covering 356-394 (NNNNNNNNNNNNNNNNNNSNNNNNNNSSISKSLVEISSG) has biased composition (low complexity). Residues 395–404 (SKERNDRDSP) are compositionally biased toward basic and acidic residues. The span at 405 to 419 (SRQLFVSNDGNTLNT) shows a compositional bias: polar residues. WD repeat units follow at residues 458-486 (KGYH…RVYD), 500-528 (GHEG…KVWD), 540-568 (GHDK…KVWD), 580-608 (SHAR…KVWD), 620-648 (GHTK…RVWN), 660-688 (GHDR…KIWD), and 700-730 (GHNA…RVWG).

Belongs to the protein kinase superfamily. Alpha-type protein kinase family. ALPK subfamily.

It carries out the reaction L-threonyl-[myosin heavy-chain] + ATP = O-phospho-L-threonyl-[myosin heavy-chain] + ADP + H(+). In terms of biological role, catalyzes its autophosphorylation, which is needed for enzymatic activity and phosphorylates myosin II heavy chain at a threonine in the C-terminal tail region. This phosphorylation is critical in regulating the assembly and disassembly of myosin II filament. Participates in control of myosin localization. In Dictyostelium discoideum (Social amoeba), this protein is Myosin heavy chain kinase B (mhkB).